A 396-amino-acid chain; its full sequence is Elongation factor Tu (396 aa).

In terms of domain architecture, tr-type G spans 10-206; the sequence is KPHCNIGTIG…AVDEFIPQPT (197 aa). The tract at residues 19–26 is G1; the sequence is GHVDHGKT. 19–26 serves as a coordination point for GTP; it reads GHVDHGKT. Thr-26 lines the Mg(2+) pocket. Positions 60–64 are G2; it reads GITIS. A G3 region spans residues 81 to 84; that stretch reads DCPG. Residues 81–85 and 136–139 each bind GTP; these read DCPGH and NKVD. The interval 136–139 is G4; the sequence is NKVD. The interval 174–176 is G5; the sequence is SAL.

The protein belongs to the TRAFAC class translation factor GTPase superfamily. Classic translation factor GTPase family. EF-Tu/EF-1A subfamily. Monomer.

The protein resides in the cytoplasm. The enzyme catalyses GTP + H2O = GDP + phosphate + H(+). GTP hydrolase that promotes the GTP-dependent binding of aminoacyl-tRNA to the A-site of ribosomes during protein biosynthesis. In Pelagibacter ubique (strain HTCC1062), this protein is Elongation factor Tu.